A 142-amino-acid chain; its full sequence is Type II secretion system core protein G (142 aa).

A propeptide spans 1-8 (MQRRQQSG) (leader sequence). Residue phenylalanine 9 is modified to N-methylphenylalanine. A helical membrane pass occupies residues 9–29 (FTLIEIMVVVVILGILAALVV). Residues 121 to 142 (SLGADGKEGGSDNDADIGNWDN) are disordered.

This sequence belongs to the GSP G family. As to quaternary structure, type II secretion system is composed of four main components: the outer membrane complex, the inner membrane complex, the cytoplasmic secretion ATPase and the periplasm-spanning pseudopilus. Forms homomultimers. Interacts with pseudopilin tip ternary complex made of XcpX, XcpU, XcpV and XcpW. Interacts with PilA. Cleaved by the prepilin peptidase. In terms of processing, methylated by prepilin peptidase at the amino group of the N-terminal phenylalanine once the leader sequence is cleaved.

It localises to the cell inner membrane. Its function is as follows. Core component of the type II secretion system required for the energy-dependent secretion of extracellular factors such as proteases and toxins from the periplasm. Pseudopilin (pilin-like) protein that polymerizes to form the pseudopilus. Further polymerization triggers pseudopilus growth. Type II pseudopilus confers increased bacterial adhesive capabilities. In Pseudomonas aeruginosa (strain ATCC 15692 / DSM 22644 / CIP 104116 / JCM 14847 / LMG 12228 / 1C / PRS 101 / PAO1), this protein is Type II secretion system core protein G (xcpT).